The sequence spans 137 residues: Putative pre-16S rRNA nuclease (137 aa).

Belongs to the YqgF nuclease family.

The protein resides in the cytoplasm. Functionally, could be a nuclease involved in processing of the 5'-end of pre-16S rRNA. This chain is Putative pre-16S rRNA nuclease, found in Anaeromyxobacter dehalogenans (strain 2CP-1 / ATCC BAA-258).